Here is a 65-residue protein sequence, read N- to C-terminus: Light-harvesting protein B800/830/1020 alpha-2 chain (65 aa).

The Cytoplasmic segment spans residues 1-13 (MWKLWKFVDFRMT). Residues 14 to 34 (AVGFHIFFALIAFAVHFACIS) form a helical membrane-spanning segment. His29 is an a bacteriochlorophyll binding site. The Periplasmic segment spans residues 35–65 (SERFNWLEGAPAAEYYMDENPGIWKRTSYDG).

Belongs to the antenna complex alpha subunit family. As to quaternary structure, the core complex is formed by different alpha and beta chains, binding bacteriochlorophyll molecules, and arranged most probably in tetrameric structures disposed around the reaction center. The non-pigmented gamma chains may constitute additional components.

Its subcellular location is the cell inner membrane. In terms of biological role, antenna complexes are light-harvesting systems, which transfer the excitation energy to the reaction centers. This is Light-harvesting protein B800/830/1020 alpha-2 chain from Halorhodospira halochloris (Ectothiorhodospira halochloris).